The following is a 67-amino-acid chain: uncharacterized protein (67 aa).

This is an uncharacterized protein from Vaccinia virus (strain Copenhagen) (VACV).